Reading from the N-terminus, the 861-residue chain is Probable alpha,alpha-trehalose-phosphate synthase [UDP-forming] 10 (861 aa).

At S5 the chain carries Phosphoserine. T32 bears the Phosphothreonine mark. Positions 59–546 are glycosyltransferase; that stretch reads ERKIIVANFL…ARSFSQDLER (488 aa).

The protein in the N-terminal section; belongs to the glycosyltransferase 20 family. This sequence in the C-terminal section; belongs to the trehalose phosphatase family.

It catalyses the reaction D-glucose 6-phosphate + UDP-alpha-D-glucose = alpha,alpha-trehalose 6-phosphate + UDP + H(+). In Arabidopsis thaliana (Mouse-ear cress), this protein is Probable alpha,alpha-trehalose-phosphate synthase [UDP-forming] 10 (TPS10).